A 245-amino-acid chain; its full sequence is Ribosomal RNA small subunit methyltransferase J (245 aa).

Residues 94–95, 110–111, and Asp164 contribute to the S-adenosyl-L-methionine site; these read RD and ER.

It belongs to the methyltransferase superfamily. RsmJ family.

The protein resides in the cytoplasm. It catalyses the reaction guanosine(1516) in 16S rRNA + S-adenosyl-L-methionine = N(2)-methylguanosine(1516) in 16S rRNA + S-adenosyl-L-homocysteine + H(+). In terms of biological role, specifically methylates the guanosine in position 1516 of 16S rRNA. This is Ribosomal RNA small subunit methyltransferase J from Dechloromonas aromatica (strain RCB).